We begin with the raw amino-acid sequence, 274 residues long: Diaminopimelate epimerase (274 aa).

3 residues coordinate substrate: asparagine 11, glutamine 44, and asparagine 64. The active-site Proton donor is cysteine 73. Residues 74 to 75 (GN), asparagine 157, asparagine 190, and 208 to 209 (ER) contribute to the substrate site. The active-site Proton acceptor is the cysteine 217. 218 to 219 (GS) contributes to the substrate binding site.

This sequence belongs to the diaminopimelate epimerase family. Homodimer.

The protein localises to the cytoplasm. It catalyses the reaction (2S,6S)-2,6-diaminopimelate = meso-2,6-diaminopimelate. Its pathway is amino-acid biosynthesis; L-lysine biosynthesis via DAP pathway; DL-2,6-diaminopimelate from LL-2,6-diaminopimelate: step 1/1. In terms of biological role, catalyzes the stereoinversion of LL-2,6-diaminopimelate (L,L-DAP) to meso-diaminopimelate (meso-DAP), a precursor of L-lysine and an essential component of the bacterial peptidoglycan. The polypeptide is Diaminopimelate epimerase (Escherichia coli O127:H6 (strain E2348/69 / EPEC)).